Consider the following 302-residue polypeptide: D-alanine--D-alanine ligase (302 aa).

The ATP-grasp domain occupies 100 to 295 (KTVFDHHGIL…FNELIAKLIE (196 aa)). Residue 126 to 180 (QDLEPPVFIKPNSGGSSLGMTFARTAEELEKGIETVFSLGDSALVEEYTKGIEVT) participates in ATP binding. Positions 250, 262, and 264 each coordinate Mg(2+).

The protein belongs to the D-alanine--D-alanine ligase family. Mg(2+) is required as a cofactor. It depends on Mn(2+) as a cofactor.

It is found in the cytoplasm. It carries out the reaction 2 D-alanine + ATP = D-alanyl-D-alanine + ADP + phosphate + H(+). The protein operates within cell wall biogenesis; peptidoglycan biosynthesis. Cell wall formation. This is D-alanine--D-alanine ligase from Maridesulfovibrio salexigens (strain ATCC 14822 / DSM 2638 / NCIMB 8403 / VKM B-1763) (Desulfovibrio salexigens).